Consider the following 205-residue polypeptide: MDDDVLTTLKILIIGESGVGKSSLLLRFTDDTFDPELAATIGVDFKVKTIAIDGNRAKLAIWDTAGQERFRTLTPSYYRGAQGVILVYDVTKRDTFTKLENWLNELETYCTRNDLVKMLVGNKIDKDNREVDRNEGLKFARKHSMLFIEASAKTRDGVQCAFEELVEKILQTPGLWESSIQNHGVQLSDNEPQRQGACGGYCSLV.

Positions 17, 20, 21, 22, 23, 34, 35, 40, 66, 123, 125, and 152 each coordinate GTP. A Mg(2+)-binding site is contributed by S22. Short sequence motifs (switch) lie at residues 31 to 45 (DTFDPELAATIGVDF) and 63 to 80 (DTAGQERFRTLTPSYYRG). Position 40 (T40) interacts with Mg(2+). Residue C198 is the site of S-palmitoyl cysteine attachment. At C202 the chain carries Cysteine methyl ester. Residue C202 is the site of S-geranylgeranyl cysteine attachment. A propeptide spans 203 to 205 (SLV) (removed in mature form).

This sequence belongs to the small GTPase superfamily. Rab family. It depends on Mg(2+) as a cofactor.

The protein resides in the endoplasmic reticulum membrane. The protein localises to the golgi apparatus. Its subcellular location is the cis-Golgi network membrane. It localises to the lipid droplet. It is found in the apical cell membrane. It carries out the reaction GTP + H2O = GDP + phosphate + H(+). Regulated by guanine nucleotide exchange factors (GEFs) which promote the exchange of bound GDP for free GTP. Regulated by GTPase activating proteins (GAPs) which increase the GTP hydrolysis activity at the ER membrane. Inhibited by GDP dissociation inhibitors (GDIs) which prevent Rab-GDP dissociation. Its function is as follows. The small GTPases Rab are key regulators of intracellular membrane trafficking, from the formation of transport vesicles to their fusion with membranes. Rabs cycle between an inactive GDP-bound form and an active GTP-bound form that is able to recruit to membranes different sets of downstream effectors directly responsible for vesicle formation, movement, tethering and fusion. Required for the localization of ZFYVE1 to lipid droplets and for its function in mediating the formation of endoplasmic reticulum-lipid droplets (ER-LD) contacts. Also required for maintaining endoplasmic reticulum structure. Plays a role in apical endocytosis/recycling. Plays a key role in eye and brain development and neurodegeneration. This is Ras-related protein Rab-18-B (rab18b) from Danio rerio (Zebrafish).